The sequence spans 116 residues: Appetite-regulating hormone (116 aa).

Positions Met-1–Ala-23 are cleaved as a signal peptide. The O-decanoyl serine; alternate moiety is linked to residue Ser-26. A lipid anchor (O-hexanoyl serine; alternate) is attached at Ser-26. Ser-26 carries O-octanoyl serine; alternate lipidation. A disordered region spans residues Ser-29–Ala-67. The segment covering Glu-31–Lys-42 has biased composition (basic and acidic residues). Positions Ala-51–Arg-74 are cleaved as a propeptide — removed in mature form. Leu-97 bears the Leucine amide mark. Residues Gly-98–Glu-116 constitute a propeptide, removed in mature form.

This sequence belongs to the motilin family. Post-translationally, O-octanoylated by GOAT/MBOAT4. O-octanoylation is essential for ghrelin activity. Amidation of Leu-97 is essential for obestatin activity.

Its subcellular location is the secreted. In terms of biological role, ghrelin is the ligand for growth hormone secretagogue receptor type 1 (GHSR). Induces the release of growth hormone from the pituitary. Has an appetite-stimulating effect, induces adiposity and stimulates gastric acid secretion. Involved in growth regulation. Its function is as follows. Obestatin may be the ligand for GPR39. May have an appetite-reducing effect resulting in decreased food intake. May reduce gastric emptying activity and jejunal motility. This chain is Appetite-regulating hormone (GHRL), found in Capra hircus (Goat).